The following is a 284-amino-acid chain: Tropomyosin alpha-1 chain (284 aa).

The interval 1-38 is disordered; the sequence is MDAIKKKMQMLKLDKENALDRAEQAEADKKAAEERSKQ. The stretch at 1–284 forms a coiled coil; sequence MDAIKKKMQM…DHALNDMTSI (284 aa). Residues 12-38 are compositionally biased toward basic and acidic residues; it reads KLDKENALDRAEQAEADKKAAEERSKQ.

Belongs to the tropomyosin family. As to quaternary structure, homodimer. Heterodimer of an alpha (TPM1, TPM3 or TPM4) and a beta (TPM2) chain. Interacts with HRG (via the HRR domain); the interaction contributes to the antiangiogenic properties of the histidine/proline-rich region (HRR) of HRG.

The protein resides in the cytoplasm. The protein localises to the cytoskeleton. Binds to actin filaments in muscle and non-muscle cells. Plays a central role, in association with the troponin complex, in the calcium dependent regulation of vertebrate striated muscle contraction. Smooth muscle contraction is regulated by interaction with caldesmon. In non-muscle cells is implicated in stabilizing cytoskeleton actin filaments. The chain is Tropomyosin alpha-1 chain (TPM1) from Coturnix japonica (Japanese quail).